We begin with the raw amino-acid sequence, 199 residues long: Peroxynitrite isomerase (199 aa).

Residues 20 to 26 (GVWEGSG) carry the GXWXGXG motif. 2 residues coordinate heme b: Lys158 and His190.

Belongs to the nitrobindin family. In terms of assembly, homodimer. Heme b serves as cofactor.

It catalyses the reaction peroxynitrite = nitrate. It participates in nitrogen metabolism. Heme-binding protein able to scavenge peroxynitrite and to protect free L-tyrosine against peroxynitrite-mediated nitration, by acting as a peroxynitrite isomerase that converts peroxynitrite to nitrate. Therefore, this protein likely plays a role in peroxynitrite sensing and in the detoxification of reactive nitrogen and oxygen species (RNS and ROS, respectively). Is able to bind nitric oxide (NO) in vitro, but may act as a sensor of peroxynitrite levels in vivo. The sequence is that of Peroxynitrite isomerase from Clavibacter sepedonicus (Clavibacter michiganensis subsp. sepedonicus).